The primary structure comprises 254 residues: tRNA threonylcarbamoyladenosine dehydratase (254 aa).

This sequence belongs to the HesA/MoeB/ThiF family.

In terms of biological role, catalyzes the ATP-dependent dehydration of threonylcarbamoyladenosine at position 37 (t(6)A37) to form cyclic t(6)A37 (ct(6)A37) in tRNAs that read codons beginning with adenine. This is tRNA threonylcarbamoyladenosine dehydratase (tcdA) from Bacillus subtilis (strain 168).